Reading from the N-terminus, the 479-residue chain is Poly(A) polymerase catalytic subunit (479 aa).

Active-site residues include aspartate 202 and aspartate 204. Ca(2+) is bound by residues aspartate 202, aspartate 204, and aspartate 253.

The protein belongs to the poxviridae poly(A) polymerase catalytic subunit family. As to quaternary structure, heterodimer of a large (catalytic) subunit and a small (regulatory) subunit.

The enzyme catalyses RNA(n) + ATP = RNA(n)-3'-adenine ribonucleotide + diphosphate. Polymerase that creates the 3'-poly(A) tail of mRNA's. In Homo sapiens (Human), this protein is Poly(A) polymerase catalytic subunit (OPG063).